Reading from the N-terminus, the 194-residue chain is MGMYKYIREAWKSPKKSYVGQLLKKRMIKWRREPVVVRVERPTRLDRARSLGYQAKQGYVIVRVRVRRGGRKRPRWKGGRKPSKMGMVKYSPKKSLQWIAEEKAARKFPNLEVLNSYWVGEDGMYKWFEVIMVDPHHPVIKSDPKIAWIAGKAHKGRVFRGLTSAGRKSRGLRNKGKGAEKVRPSVRANKGKTK.

Residues 162–194 form a disordered region; the sequence is LTSAGRKSRGLRNKGKGAEKVRPSVRANKGKTK. Positions 167–176 are enriched in basic residues; the sequence is RKSRGLRNKG.

The protein belongs to the eukaryotic ribosomal protein eL15 family.

In Thermococcus onnurineus (strain NA1), this protein is Large ribosomal subunit protein eL15.